The chain runs to 246 residues: Cold-regulated protein 27 (246 aa).

2 disordered regions span residues 1–39 (MVGD…MYSA) and 151–232 (EPEN…VVPL). Over residues 168-180 (SSGSASSLKQLSS) the composition is skewed to low complexity.

It localises to the nucleus. In terms of biological role, together with COR28, involved in central circadian clock regulation and in flowering promotion, by binding to the chromatin of clock-associated evening genes TOC1, PRR5, ELF4 and cold-responsive genes in order to repress their transcription. Negative regulator of freezing tolerance. In Arabidopsis thaliana (Mouse-ear cress), this protein is Cold-regulated protein 27.